The primary structure comprises 1436 residues: Inositol hexakisphosphate and diphosphoinositol-pentakisphosphate kinase 1 (1436 aa).

Position 64 to 65 (64 to 65 (KK)) interacts with substrate. Residues Arg-145, Lys-198, His-205, Arg-224, 248-251 (EEFM), and 257-259 (DVK) each bind ATP. 224–225 (RK) is a substrate binding site. Lys-259 and Arg-273 together coordinate substrate. ATP is bound by residues Ser-275, Asp-320, and 332–334 (DVN). Position 337-340 (337-340 (SFVK)) interacts with substrate. Positions 382–453 (PTTSGTMMEL…VLDITRLLLA (72 aa)) are polyphosphoinositide-binding domain. The disordered stretch occupies residues 915–998 (GSAPAGCGFR…TSSSRPGGYR (84 aa)). Phosphoserine occurs at positions 939, 982, 1032, 1068, 1140, and 1147. Disordered stretches follow at residues 1131 to 1191 (NHQA…GFSD) and 1389 to 1436 (SELS…EAIS). Residues 1163 to 1181 (SSGPSSTVSSAGPSSPTTV) are compositionally biased toward low complexity. Residues 1405 to 1436 (LSEETELQAQEVSEEIDQESEVVDELPPEAIS) are compositionally biased toward acidic residues.

The protein belongs to the histidine acid phosphatase family. VIP1 subfamily.

The protein resides in the cytoplasm. Its subcellular location is the cytosol. It localises to the cell membrane. The catalysed reaction is 1D-myo-inositol hexakisphosphate + ATP = 1-diphospho-1D-myo-inositol 2,3,4,5,6-pentakisphosphate + ADP. It catalyses the reaction 5-diphospho-1D-myo-inositol 1,2,3,4,6-pentakisphosphate + ATP + H(+) = 1,5-bis(diphospho)-1D-myo-inositol 2,3,4,6-tetrakisphosphate + ADP. In terms of biological role, bifunctional inositol kinase that acts in concert with the IP6K kinases IP6K1, IP6K2 and IP6K3 to synthesize the diphosphate group-containing inositol pyrophosphates diphosphoinositol pentakisphosphate, PP-InsP5, and bis-diphosphoinositol tetrakisphosphate, (PP)2-InsP4. PP-InsP5 and (PP)2-InsP4, also respectively called InsP7 and InsP8, regulate a variety of cellular processes, including apoptosis, vesicle trafficking, cytoskeletal dynamics, exocytosis, insulin signaling and neutrophil activation. Phosphorylates inositol hexakisphosphate (InsP6) at position 1 to produce PP-InsP5 which is in turn phosphorylated by IP6Ks to produce (PP)2-InsP4. Alternatively, phosphorylates PP-InsP5 at position 1, produced by IP6Ks from InsP6, to produce (PP)2-InsP4. Activated when cells are exposed to hyperosmotic stress. The protein is Inositol hexakisphosphate and diphosphoinositol-pentakisphosphate kinase 1 of Mus musculus (Mouse).